Reading from the N-terminus, the 367-residue chain is 2-aminoethylphosphonate--pyruvate transaminase (367 aa).

At Lys-193 the chain carries N6-(pyridoxal phosphate)lysine.

The protein belongs to the class-V pyridoxal-phosphate-dependent aminotransferase family. PhnW subfamily. In terms of assembly, homodimer. It depends on pyridoxal 5'-phosphate as a cofactor.

It carries out the reaction (2-aminoethyl)phosphonate + pyruvate = phosphonoacetaldehyde + L-alanine. Its function is as follows. Involved in phosphonate degradation. This is 2-aminoethylphosphonate--pyruvate transaminase from Vibrio vulnificus (strain CMCP6).